The primary structure comprises 580 residues: Small conductance calcium-activated potassium channel protein 2 (580 aa).

Disordered stretches follow at residues 1 to 68 (MSSC…VSKP) and 88 to 116 (GGGG…KKNQ). Low complexity predominate over residues 48 to 61 (SSPSAAAAASSSAP). The span at 88–104 (GGGGGGGGGGGGSGHGS) shows a compositional bias: gly residues. A helical membrane pass occupies residues 140–160 (LIFGMFGIVVMVIETELSWGA). Position 161 is a phosphotyrosine (Y161). A helical membrane pass occupies residues 169–189 (LALKCLISLSTIILLGLIIVY). Residues 215-235 (IFFICLEILVCAIHPIPGNYT) form a helical membrane-spanning segment. The helical transmembrane segment at 257–277 (IILSIPMFLRLYLIARVMLLH) threads the bilayer. Residues 306-326 (LMTICPGTVLLVFSISLWIIA) form a helical membrane-spanning segment. The pore-forming intramembrane region spans 346–366 (FLGAMWLISITFLSIGYGDMV). A helical membrane pass occupies residues 375-395 (VCLLTGIMGAGCTALVVAVVA). Residues 413-489 (DTQLTKRVKN…LVDLAKTQNI (77 aa)) are calmodulin-binding. Over residues 551–560 (HVTYNAERSR) the composition is skewed to basic and acidic residues. Positions 551–580 (HVTYNAERSRSSSRRRRSSSTAPPTSSESS) are disordered. Low complexity predominate over residues 569–580 (SSTAPPTSSESS).

This sequence belongs to the potassium channel KCNN family. KCa2.2/KCNN2 subfamily. Homodimer. Heteromultimer with KCNN1 and KCNN3. The complex is composed of 4 channel subunits each of which binds to a calmodulin subunit which regulates the channel activity through calcium-binding. Interacts (via N-terminal domain) with MPP2. In terms of tissue distribution, brain.

It is found in the membrane. Its subcellular location is the cytoplasm. The protein resides in the myofibril. The protein localises to the sarcomere. It localises to the z line. The enzyme catalyses K(+)(in) = K(+)(out). With respect to regulation, inhibited by bee venom neurotoxin apamin. Inhibited by UCL 1684 and tetraethylammonium (TEA). In terms of biological role, small conductance calcium-activated potassium channel that mediates the voltage-independent transmembrane transfer of potassium across the cell membrane through a constitutive interaction with calmodulin which binds the intracellular calcium allowing its opening. The current is characterized by a voltage-independent activation, an intracellular calcium concentration increase-dependent activation and a single-channel conductance of about 3 picosiemens. Also presents an inwardly rectifying current, thus reducing its already small outward conductance of potassium ions, which is particularly the case when the membrane potential displays positive values, above + 20 mV. The inward rectification could be due to a blockade of the outward current by intracellular divalent cations such as calcium and magnesium and could also be due to an intrinsic property of the channel pore, independent of intracellular divalent ions. There are three positively charged amino acids in the S6 transmembrane domain, close to the pore, that collectively control the conductance and rectification through an electrostatic mechanism. Additionally, electrostatic contributions from these residues also play an important role in determining the intrinsic open probability of the channel in the absence of calcium, affecting the apparent calcium affinity for activation. Forms an heteromeric complex with calmodulin, which is constitutively associated in a calcium-independent manner. Channel opening is triggered when calcium binds the calmodulin resulting in a rotary movement leading to the formation of the dimeric complex to open the gate. Plays a role in the repolarization phase of cardiac action potential. The polypeptide is Small conductance calcium-activated potassium channel protein 2 (Rattus norvegicus (Rat)).